The sequence spans 290 residues: Membrane protein insertase YidC 2 (290 aa).

The first 19 residues, Met1–Gly19, serve as a signal peptide directing secretion. Cys20 is lipidated: N-palmitoyl cysteine. Cys20 carries S-diacylglycerol cysteine lipidation. A run of 5 helical transmembrane segments spans residues Phe56 to Leu76, Met134 to Leu154, Pro176 to Ser196, Met211 to Leu231, and Tyr232 to Ser252. A disordered region spans residues Tyr266–Lys290. The span at Asn280–Lys290 shows a compositional bias: polar residues.

It belongs to the OXA1/ALB3/YidC family. Type 2 subfamily.

It is found in the cell membrane. Required for the insertion and/or proper folding and/or complex formation of integral membrane proteins into the membrane. Involved in integration of membrane proteins that insert both dependently and independently of the Sec translocase complex, as well as at least some lipoproteins. The chain is Membrane protein insertase YidC 2 from Staphylococcus epidermidis (strain ATCC 35984 / DSM 28319 / BCRC 17069 / CCUG 31568 / BM 3577 / RP62A).